A 204-amino-acid polypeptide reads, in one-letter code: ATP synthase subunit 4, mitochondrial (204 aa).

2 consecutive transmembrane segments (helical) span residues 27-47 (GILA…LYVV) and 52-72 (ILLV…APLY).

As to quaternary structure, F-type ATP synthases have 2 components, the catalytic core F(1) and the membrane-embedded component F(0), linked together by a central stalk and a peripheral stalk. The central stalk, also called rotor shaft, is often seen as part of F(1). The peripheral stalk is seen as part of F(0). F(0) contains the membrane channel next to the rotor. F-type ATP synthases form dimers but each monomer functions independently in ATP generation. The dimer consists of 18 different polypeptides: ATP1 (subunit alpha, part of F(1), 3 molecules per monomer), ATP2 (subunit beta, part of F(1), 3 molecules per monomer), ATP3 (subunit gamma, part of the central stalk), ATP4 (subunit b, part of the peripheral stalk), ATP5/OSCP (subunit 5/OSCP, part of the peripheral stalk), ATP6 (subunit a, part of the peripheral stalk), ATP7 (subunit d, part of the peripheral stalk), ATP8 (subunit 8, part of the peripheral stalk), OLI1 (subunit c, part of the rotor, 10 molecules per monomer), ATP14 (subunit h, part of the peripheral stalk), ATP15 (subunit epsilon, part of the central stalk), ATP16 (subunit delta, part of the central stalk), ATP17 (subunit f, part of the peripheral stalk), ATP18 (subunit i/j, part of the peripheral stalk). Dimer-specific subunits are ATP19 (subunit k, at interface between monomers), ATP20 (subunit g, at interface between monomers), TIM11 (subunit e, at interface between monomers). Also contains subunit L.

Its subcellular location is the mitochondrion inner membrane. In terms of biological role, mitochondrial membrane ATP synthase (F(1)F(0) ATP synthase or Complex V) produces ATP from ADP in the presence of a proton gradient across the membrane which is generated by electron transport complexes of the respiratory chain. F-type ATP synthases consist of two structural domains, F(1) - containing the extramembraneous catalytic core, and F(0) - containing the membrane proton channel, linked together by a central stalk and a peripheral stalk. During catalysis, ATP synthesis in the catalytic domain of F(1) is coupled via a rotary mechanism of the central stalk subunits to proton translocation. Part of the complex F(0) domain and the peripheral stalk, which acts as a stator to hold the catalytic alpha/ATP1(3)beta/ATP2(3) subcomplex and subunit a/ATP6 static relative to the rotary elements. This is ATP synthase subunit 4, mitochondrial from Pichia angusta (Yeast).